The chain runs to 56 residues: Large ribosomal subunit protein bL32 (56 aa).

Residues 1–16 show a composition bias toward basic residues; that stretch reads MAVQKSKKSRSMRGMR. Residues 1-33 are disordered; the sequence is MAVQKSKKSRSMRGMRRSHDALTTSAVSVDATS. The segment covering 21 to 33 has biased composition (polar residues); that stretch reads ALTTSAVSVDATS.

Belongs to the bacterial ribosomal protein bL32 family.

In Aliivibrio fischeri (strain ATCC 700601 / ES114) (Vibrio fischeri), this protein is Large ribosomal subunit protein bL32.